We begin with the raw amino-acid sequence, 127 residues long: uncharacterized protein (127 aa).

A signal peptide spans 1 to 16 (MIKKIIFGIAILLSTS). Cys-17 carries N-palmitoyl cysteine lipidation. The S-diacylglycerol cysteine moiety is linked to residue Cys-17. Residues 56 to 101 (EVREEIQKYRVAIVKINKKKRELYNRLSKEAQNFLAEQQKYKQKLS) adopt a coiled-coil conformation. Polar residues predominate over residues 107-118 (VENDQKNNTADS). Positions 107–127 (VENDQKNNTADSNDNKSKDTK) are disordered.

The protein resides in the cell membrane. This is an uncharacterized protein from Rickettsia conorii (strain ATCC VR-613 / Malish 7).